The sequence spans 533 residues: Beta-xylosidase (533 aa).

Asp-14 acts as the Proton acceptor in catalysis. Catalysis depends on Glu-186, which acts as the Proton donor.

The protein belongs to the glycosyl hydrolase 43 family. In terms of assembly, homodimer.

Its subcellular location is the cell membrane. The catalysed reaction is Hydrolysis of (1-&gt;4)-beta-D-xylans, to remove successive D-xylose residues from the non-reducing termini.. This chain is Beta-xylosidase (xynB), found in Bacillus subtilis (strain 168).